A 240-amino-acid chain; its full sequence is Glutathione S-transferase theta-1 (240 aa).

Residues 2–82 (GLELYLDLLS…YLARKYKVPD (81 aa)) form the GST N-terminal domain. Residues His40, 53–54 (KV), and 66–67 (ES) each bind glutathione. The GST C-terminal domain occupies 88-226 (DLQACARVDE…AKDSQPADPT (139 aa)).

Belongs to the GST superfamily. Theta family. Homodimer.

The protein resides in the cytoplasm. The enzyme catalyses RX + glutathione = an S-substituted glutathione + a halide anion + H(+). Conjugation of reduced glutathione to a wide number of exogenous and endogenous hydrophobic electrophiles. Also binds steroids, bilirubin, carcinogens and numerous organic anions. Has dichloromethane dehalogenase activity. The chain is Glutathione S-transferase theta-1 (GSTT1) from Bos taurus (Bovine).